The following is a 205-amino-acid chain: High frequency lysogenization protein HflD homolog (205 aa).

It belongs to the HflD family.

The protein resides in the cytoplasm. It localises to the cell inner membrane. This is High frequency lysogenization protein HflD homolog from Vibrio parahaemolyticus serotype O3:K6 (strain RIMD 2210633).